A 442-amino-acid polypeptide reads, in one-letter code: MKKYDRGWASLETGAALLIVMLLIAWGAGIWQDYIQTKGWQTEARLVSNWTSAARSYIGKNYTTLQGSSTTTTPAVITTTMLKNTGFLSSGFTETNSEGQRLQAYVVRNAQNPELLQAMVVSSGGTPYPVKALIQMAKDITTGLGGYIQDGKTATGALRSWSVALSNYGAKSGNGHIAVLLSTDELSGAAEDTDRLYRFQVNGRPDLNKMHTAIDMGSNNLNNVGAVNAQTGNFSGNVNGVNGTFSGQVKGNSGNFDVNVTAGGDIRSNNGWLITRNSKGWLNETHGGGFYMSDGSWVRSVNNKGIYTGGQVKGGTVRADGRLYTGEYLQLERTAVAGASCSPNGLVGRDNTGAILSCQSGTWKSSSASIWTNIKTFTLYPKNTQVLGRFKLCINTYRIDGREMAETEVVPIDMPDSNGEMIWQAKNYTQYSSYFMKITCLK.

The constant region stretch occupies residues 1 to 361 (MKKYDRGWAS…TGAILSCQSG (361 aa)). A variable region region spans residues 362 to 442 (TWKSSSASIW…SYFMKITCLK (81 aa)).

The chain is Shufflon protein B from Escherichia coli.